The following is a 461-amino-acid chain: Argininosuccinate lyase (461 aa).

Belongs to the lyase 1 family. Argininosuccinate lyase subfamily.

Its subcellular location is the cytoplasm. It catalyses the reaction 2-(N(omega)-L-arginino)succinate = fumarate + L-arginine. It participates in amino-acid biosynthesis; L-arginine biosynthesis; L-arginine from L-ornithine and carbamoyl phosphate: step 3/3. This is Argininosuccinate lyase from Dehalococcoides mccartyi (strain ATCC BAA-2266 / KCTC 15142 / 195) (Dehalococcoides ethenogenes (strain 195)).